A 511-amino-acid chain; its full sequence is Maturase K (511 aa).

This sequence belongs to the intron maturase 2 family. MatK subfamily.

Its subcellular location is the plastid. Its function is as follows. Usually encoded in the trnK tRNA gene intron. Probably assists in splicing its own and other chloroplast group II introns. The sequence is that of Maturase K from Lathraea clandestina (Purple toothwort).